We begin with the raw amino-acid sequence, 556 residues long: Formate--tetrahydrofolate ligase (556 aa).

ATP is bound at residue 65-72 (TPAGEGKS).

The protein belongs to the formate--tetrahydrofolate ligase family.

It catalyses the reaction (6S)-5,6,7,8-tetrahydrofolate + formate + ATP = (6R)-10-formyltetrahydrofolate + ADP + phosphate. Its pathway is one-carbon metabolism; tetrahydrofolate interconversion. The polypeptide is Formate--tetrahydrofolate ligase (Enterococcus faecalis (strain ATCC 700802 / V583)).